The following is a 288-amino-acid chain: MKLPIFIADAFTVTAFHGNPAAVCLLESILQEDAHQQIAREMNLSETAFIRKLQPTDSFSQSSCFGLRWFTPVSEVPLCGHATMASAAVLFHKIKNVNSTLTFVTLSGELKARRAEDGIVLDFPLYPTFPQDFHEVKDLIKAAIGDTTVQDIQYSPDTRKLLVRLSDSYDRSFLESLKVNTEPLPGIEKTGKVKGLILTVKGESGGQTTPYDFYSRYFAPWVGVPEDPVTGSAHTVLSSYWSQQLGKKEMRAFQCSCRGGELDISLRPDGRVDMKGGAAVVLEGMLTA.

Residue Glu46 is part of the active site.

It belongs to the PhzF family. As to quaternary structure, interacts with UNRIP/MAWD.

This is Phenazine biosynthesis-like domain-containing protein (Pbld) from Rattus norvegicus (Rat).